Here is a 136-residue protein sequence, read N- to C-terminus: Protein NrdI (136 aa).

This sequence belongs to the NrdI family.

In terms of biological role, probably involved in ribonucleotide reductase function. The chain is Protein NrdI from Klebsiella pneumoniae (strain 342).